Consider the following 388-residue polypeptide: Zinc finger protein ubi-d4 A (388 aa).

A disordered region spans residues 60–190 (GPGSAPGQLY…AKGKGIGSAR (131 aa)). 2 stretches are compositionally biased toward basic and acidic residues: residues 97 to 107 (PDPEQMLKKEG) and 123 to 137 (DPIEKRIMPDSRDDD). Over residues 156-170 (PDDFLDDLDDEDYEE) the composition is skewed to acidic residues. The C2H2-type zinc-finger motif lies at 205–228 (YACDICGKRYKNRPGLSYHYAHSH). The disordered stretch occupies residues 233–264 (EGAGAEDKEDSQPPTPIMHRPEEQKSKKGPDG). The segment covering 251 to 262 (HRPEEQKSKKGP) has biased composition (basic and acidic residues). PHD-type zinc fingers lie at residues 269–329 (NNYC…CKCC) and 326–376 (CKCC…CLDL).

The protein belongs to the requiem/DPF family.

The protein resides in the cytoplasm. Its subcellular location is the nucleus. Its function is as follows. May be a transcription factor required for the apoptosis response following survival factor withdrawal from myeloid cells. Might also have a role in the development and maturation of lymphoid cells. This Xenopus laevis (African clawed frog) protein is Zinc finger protein ubi-d4 A (req-a).